Consider the following 850-residue polypeptide: Elongation factor 2 (850 aa).

Residues 17–351 (KNIRNISVIA…QIALKLPSPL (335 aa)) enclose the tr-type G domain. Residues 26-33 (AHVDHGKS), 159-162 (NKLD), and 213-215 (SGL) contribute to the GTP site. His-707 carries the diphthamide modification.

It belongs to the TRAFAC class translation factor GTPase superfamily. Classic translation factor GTPase family. EF-G/EF-2 subfamily.

It is found in the cytoplasm. The catalysed reaction is GTP + H2O = GDP + phosphate + H(+). Its pathway is protein biosynthesis; polypeptide chain elongation. Its function is as follows. Catalyzes the GTP-dependent ribosomal translocation step during translation elongation. During this step, the ribosome changes from the pre-translocational (PRE) to the post-translocational (POST) state as the newly formed A-site-bound peptidyl-tRNA and P-site-bound deacylated tRNA move to the P and E sites, respectively. Catalyzes the coordinated movement of the two tRNA molecules, the mRNA and conformational changes in the ribosome. This Encephalitozoon cuniculi (strain GB-M1) (Microsporidian parasite) protein is Elongation factor 2 (EFT1).